We begin with the raw amino-acid sequence, 526 residues long: Probable inorganic phosphate transporter 1-3 (526 aa).

Residues 1 to 21 (MADGQLKVLTTLDHARTQWYH) lie on the Cytoplasmic side of the membrane. Residues 22-42 (FMAIVIAGMGFFTDAYDLFCI) form a helical membrane-spanning segment. Topologically, residues 43–70 (SLVSKLLGRIYYTDLAGDNPGSLPPNVS) are extracellular. The helical transmembrane segment at 71 to 91 (AAVNGVALCGTLAGQLFFGWL) threads the bilayer. Over 92–99 (GDKLGRKS) the chain is Cytoplasmic. Residues 100–120 (VYGFTLVLMVVCSVASGLSFG) traverse the membrane as a helical segment. Over 121–124 (RTAK) the chain is Extracellular. Residues 125 to 145 (GVVATLCFFRFWLGFGIGGDY) form a helical membrane-spanning segment. Residues 146 to 163 (PLSATIMSEYANKRTRGA) lie on the Cytoplasmic side of the membrane. The helical transmembrane segment at 164 to 184 (FIAAVFAMQGFGILFGAIVAL) threads the bilayer. Over 185-211 (VVSAGFRNAYPAPSYADGRAASLVPEA) the chain is Extracellular. A helical transmembrane segment spans residues 212 to 232 (DYVWRIILMFGTVPAALTYYW). Over 233 to 294 (RMKMPETARY…GLFSRQFVRR (62 aa)) the chain is Cytoplasmic. A helical transmembrane segment spans residues 295 to 315 (HGVHLVATTSTWFLLDIAFYS). Residues 316–349 (QNLFQKDIFSKVGWIPPARTMNAVEEVFRIARAQ) are Extracellular-facing. A helical transmembrane segment spans residues 350-370 (ALIALCGTIPGYWFTVAFIDV). The Cytoplasmic segment spans residues 371-373 (AGR). The helical transmembrane segment at 374-394 (FAIQLMGFAMMTVFMLGLAAP) threads the bilayer. The Extracellular segment spans residues 395–407 (YHHWTTPGNHTGF). Residues 408–428 (VVMYGFTFFFANFGPNATTFI) traverse the membrane as a helical segment. At 429 to 444 (VPAEIYPARLRSTCHG) the chain is on the cytoplasmic side. A helical transmembrane segment spans residues 445-465 (ISAAAGKAGAIVGAFGFLYAA). Residues 466–483 (QDPHKPEAGYKPGIGIRN) lie on the Extracellular side of the membrane. Residues 484–504 (ALFVLAGTNFLGMLMTLLVPE) form a helical membrane-spanning segment. Residues 505–526 (SKGMSLEEVSKENVADDEEATA) are Cytoplasmic-facing.

It belongs to the major facilitator superfamily. Phosphate:H(+) symporter (TC 2.A.1.9) family. In terms of tissue distribution, expressed at low levels in roots.

The protein localises to the membrane. Its function is as follows. High-affinity transporter for external inorganic phosphate. The protein is Probable inorganic phosphate transporter 1-3 (PHT1-3) of Oryza sativa subsp. japonica (Rice).